The following is a 286-amino-acid chain: Flagellin FlaB2 (286 aa).

Belongs to the bacterial flagellin family. In terms of assembly, the flagellum consists of an outer layer composed of repeating units of FlaA around a core that contains several antigenically related polypeptides. Interacts with FliW; a synthetic peptide of FlaB1 (residues 229-247) partially blocks binding of this protein to FliW.

The protein localises to the periplasmic flagellum. It is found in the periplasm. Its function is as follows. Component of the core of the flagella. In Treponema pallidum (strain Nichols), this protein is Flagellin FlaB2.